A 72-amino-acid chain; its full sequence is Large ribosomal subunit protein uL29 (72 aa).

It belongs to the universal ribosomal protein uL29 family.

The polypeptide is Large ribosomal subunit protein uL29 (Chlamydia trachomatis serovar L2 (strain ATCC VR-902B / DSM 19102 / 434/Bu)).